The sequence spans 261 residues: UPF0246 protein Reut_A1014 (261 aa).

It belongs to the UPF0246 family.

The protein is UPF0246 protein Reut_A1014 of Cupriavidus pinatubonensis (strain JMP 134 / LMG 1197) (Cupriavidus necator (strain JMP 134)).